A 775-amino-acid chain; its full sequence is Subtilisin-like protease SBT3.8 (775 aa).

The first 26 residues, 1–26, serve as a signal peptide directing secretion; the sequence is MKSCRTLIFVAIILNGLSTFVAHAGA. Residues 27 to 109 constitute a propeptide, activation peptide; it reads ESKVHIVYLG…VTPDSFYQLD (83 aa). Positions 30–108 constitute an Inhibitor I9 domain; the sequence is VHIVYLGEKQ…HVTPDSFYQL (79 aa). In terms of domain architecture, Peptidase S8 spans 113–622; sequence TWDYLGLSVA…GGLVNPEKAA (510 aa). N129 carries an N-linked (GlcNAc...) asparagine glycan. D143 acts as the Charge relay system in catalysis. N-linked (GlcNAc...) asparagine glycosylation is found at N174 and N202. Residue H218 is the Charge relay system of the active site. Residues 384 to 476 enclose the PA domain; sequence SLVYPENPGN…VDYELGTDIL (93 aa). N-linked (GlcNAc...) asparagine glycans are attached at residues N395, N410, and N538. The Charge relay system role is filled by S553. 3 N-linked (GlcNAc...) asparagine glycosylation sites follow: N645, N721, and N756.

This sequence belongs to the peptidase S8 family.

The protein resides in the secreted. In Arabidopsis thaliana (Mouse-ear cress), this protein is Subtilisin-like protease SBT3.8.